The sequence spans 291 residues: Homeobox protein knotted-1-like 7 (291 aa).

An ELK domain is found at 194-214 (ELKLELKQGFKSRIEDVREEI). Residues 215–278 (MRKRRAGKLP…NQRKRNWHNN (64 aa)) constitute a DNA-binding region (homeobox; TALE-type).

It belongs to the TALE/KNOX homeobox family. In terms of assembly, may form heterodimeric complex with the TALE/BELL proteins. Interacts with OFP1, OFP2, OFP3, OFP4 and OFP6.

The protein resides in the nucleus. Functionally, may be involved in secondary cell wall biosynthesis. This chain is Homeobox protein knotted-1-like 7 (KNAT7), found in Arabidopsis thaliana (Mouse-ear cress).